A 236-amino-acid polypeptide reads, in one-letter code: Small ribosomal subunit protein uS2c (236 aa).

This sequence belongs to the universal ribosomal protein uS2 family.

It localises to the plastid. The protein resides in the chloroplast. This is Small ribosomal subunit protein uS2c (rps2) from Chaetosphaeridium globosum (Charophycean green alga).